A 1295-amino-acid polypeptide reads, in one-letter code: DNA (cytosine-5)-methyltransferase CMT2 (1295 aa).

Disordered regions lie at residues 1-23 (MLSPAKCESEEAQAPLDLHSSSR), 61-91 (RRSTTLNCNSPEENGGEGRVSQRKSSRGKSQ), and 249-287 (NSSKQSLGSNKRMRRSQRFMKGTENEGEENLGKSKGKGM). Over residues 61-72 (RRSTTLNCNSPE) the composition is skewed to polar residues. One can recognise a BAH domain in the interval 578–693 (HTFSLGDFAY…VEYSTFQTLR (116 aa)). The SAM-dependent MTase C5-type domain maps to 727–1268 (LPVLDLYSGC…YSLGMAFRGL (542 aa)). The disordered stretch occupies residues 814 to 835 (SVNSTKETSGSSSSSDDDSDSE). A Chromo domain is found at 837-902 (YEVEKLVDIC…SGFKSKILPL (66 aa)). The active site involves Cys915.

The protein belongs to the class I-like SAM-binding methyltransferase superfamily. C5-methyltransferase family.

It localises to the nucleus. The enzyme catalyses a 2'-deoxycytidine in DNA + S-adenosyl-L-methionine = a 5-methyl-2'-deoxycytidine in DNA + S-adenosyl-L-homocysteine + H(+). Functionally, may be involved in the CpXpG methylation and in gene silencing. This chain is DNA (cytosine-5)-methyltransferase CMT2 (CMT2), found in Arabidopsis thaliana (Mouse-ear cress).